The sequence spans 125 residues: Glutamyl-tRNA(Gln) amidotransferase subunit C, mitochondrial (125 aa).

This sequence belongs to the GatC family. As to quaternary structure, subunit of the heterotrimeric GatCAB amidotransferase (AdT) complex, composed of A, B and C subunits.

It is found in the mitochondrion. It catalyses the reaction L-glutamyl-tRNA(Gln) + L-glutamine + ATP + H2O = L-glutaminyl-tRNA(Gln) + L-glutamate + ADP + phosphate + H(+). In terms of biological role, allows the formation of correctly charged Gln-tRNA(Gln) through the transamidation of misacylated Glu-tRNA(Gln) in the mitochondria. The reaction takes place in the presence of glutamine and ATP through an activated gamma-phospho-Glu-tRNA(Gln). The chain is Glutamyl-tRNA(Gln) amidotransferase subunit C, mitochondrial from Drosophila mojavensis (Fruit fly).